Consider the following 637-residue polypeptide: Probable potassium transport system protein Kup (637 aa).

The next 12 helical transmembrane spans lie at 25–45, 62–82, 115–135, 149–169, 180–200, 227–247, 263–283, 295–315, 352–372, 378–398, 410–430, and 434–454; these read ISLA…LYAI, VLGV…LKYL, WFLV…GMIT, IIAP…LTGL, VGAL…VLGL, LQGF…EALY, ILFV…LLLF, LVPS…TIIA, IYVP…VIGF, LAAA…ILFY, LATN…FGAS, and LFHG…LMLT.

Belongs to the HAK/KUP transporter (TC 2.A.72) family.

Its subcellular location is the cell inner membrane. It carries out the reaction K(+)(in) + H(+)(in) = K(+)(out) + H(+)(out). Transport of potassium into the cell. Likely operates as a K(+):H(+) symporter. This Chlorobium phaeobacteroides (strain DSM 266 / SMG 266 / 2430) protein is Probable potassium transport system protein Kup.